The primary structure comprises 407 residues: BRCA1-A complex subunit Abraxas 1 (407 aa).

The region spanning 7–155 is the MPN domain; sequence LGVLSGFVLG…THCLEHALYK (149 aa). Residue S48 is modified to Phosphoserine. Residues 209 to 259 are a coiled coil; the sequence is LKEVHKINEMYAAVQEELKSICQKVEQSEREVEKLLMDVNQLKEVRRTQQA. The segment at 344–407 is disordered; that stretch reads KRKALDTHDQ…DADYPRSPTF (64 aa). The span at 347–366 shows a compositional bias: basic and acidic residues; sequence ALDTHDQGSVKRPRLLETES. 4 positions are modified to phosphoserine: S384, S385, S394, and S404. The segment covering 388–399 has biased composition (acidic residues); it reads IDIEMGSPEDDA. Residues 404–407 carry the pSXXF motif motif; sequence SPTF.

Belongs to the FAM175 family. Abraxas subfamily. In terms of assembly, component of the ARISC complex, at least composed of UIMC1/RAP80, ABRAXAS1, BRCC3/BRCC36, BABAM2 and BABAM1/NBA1. Component of the BRCA1-A complex, at least composed of the BRCA1, BARD1, UIMC1/RAP80, ABRAXAS1, BRCC3/BRCC36, BABAM2 and BABAM1/NBA1. In the complex, interacts directly with UIMC1/RAP80, BRCC3/BRCC36 and BABAM2. Homodimer. Interacts directly (when phosphorylated at Ser-404) with BRCA1. The phosphorylated homodimer can interact directly with two BRCA1 chains, giving rise to a heterotetramer. Binds polyubiquitin. Phosphorylation of Ser-404 of the pSXXF motif by ATM or ATR constitutes a specific recognition motif for the BRCT domain of BRCA1.

Its subcellular location is the nucleus. Involved in DNA damage response and double-strand break (DSB) repair. Component of the BRCA1-A complex, acting as a central scaffold protein that assembles the various components of the complex and mediates the recruitment of BRCA1. The BRCA1-A complex specifically recognizes 'Lys-63'-linked ubiquitinated histones H2A and H2AX at DNA lesion sites, leading to target the BRCA1-BARD1 heterodimer to sites of DNA damage at DSBs. This complex also possesses deubiquitinase activity that specifically removes 'Lys-63'-linked ubiquitin on histones H2A and H2AX. This Mus musculus (Mouse) protein is BRCA1-A complex subunit Abraxas 1.